A 391-amino-acid chain; its full sequence is Arginine biosynthesis bifunctional protein ArgJ 2 (391 aa).

Substrate-binding residues include K167 and S180. Residue S180 is the Nucleophile of the active site.

This sequence belongs to the ArgJ family. Heterotetramer of two alpha and two beta chains.

The protein localises to the cytoplasm. It carries out the reaction N(2)-acetyl-L-ornithine + L-glutamate = N-acetyl-L-glutamate + L-ornithine. The enzyme catalyses L-glutamate + acetyl-CoA = N-acetyl-L-glutamate + CoA + H(+). It participates in amino-acid biosynthesis; L-arginine biosynthesis; L-ornithine and N-acetyl-L-glutamate from L-glutamate and N(2)-acetyl-L-ornithine (cyclic): step 1/1. It functions in the pathway amino-acid biosynthesis; L-arginine biosynthesis; N(2)-acetyl-L-ornithine from L-glutamate: step 1/4. In terms of biological role, catalyzes two activities which are involved in the cyclic version of arginine biosynthesis: the synthesis of N-acetylglutamate from glutamate and acetyl-CoA as the acetyl donor, and of ornithine by transacetylation between N(2)-acetylornithine and glutamate. This Streptomyces clavuligerus protein is Arginine biosynthesis bifunctional protein ArgJ 2.